We begin with the raw amino-acid sequence, 695 residues long: Elongation factor G (695 aa).

The 275-residue stretch at 8–282 (EKTRNIGIMA…AVLDYLPAPT (275 aa)) folds into the tr-type G domain. GTP-binding positions include 17-24 (AHIDAGKT), 81-85 (DTPGH), and 135-138 (NKMD).

This sequence belongs to the TRAFAC class translation factor GTPase superfamily. Classic translation factor GTPase family. EF-G/EF-2 subfamily.

It is found in the cytoplasm. Functionally, catalyzes the GTP-dependent ribosomal translocation step during translation elongation. During this step, the ribosome changes from the pre-translocational (PRE) to the post-translocational (POST) state as the newly formed A-site-bound peptidyl-tRNA and P-site-bound deacylated tRNA move to the P and E sites, respectively. Catalyzes the coordinated movement of the two tRNA molecules, the mRNA and conformational changes in the ribosome. The chain is Elongation factor G from Listeria innocua serovar 6a (strain ATCC BAA-680 / CLIP 11262).